A 424-amino-acid chain; its full sequence is Glucose-1-phosphate adenylyltransferase (424 aa).

Residues Tyr112, Gly177, 192-193 (EK), and Ser210 contribute to the alpha-D-glucose 1-phosphate site.

It belongs to the bacterial/plant glucose-1-phosphate adenylyltransferase family. As to quaternary structure, homotetramer.

The enzyme catalyses alpha-D-glucose 1-phosphate + ATP + H(+) = ADP-alpha-D-glucose + diphosphate. The protein operates within glycan biosynthesis; glycogen biosynthesis. Its function is as follows. Involved in the biosynthesis of ADP-glucose, a building block required for the elongation reactions to produce glycogen. Catalyzes the reaction between ATP and alpha-D-glucose 1-phosphate (G1P) to produce pyrophosphate and ADP-Glc. The polypeptide is Glucose-1-phosphate adenylyltransferase (Methylococcus capsulatus (strain ATCC 33009 / NCIMB 11132 / Bath)).